Consider the following 194-residue polypeptide: MSSMETEKGAVPTPQAPPVAPTDNKYRVVDVILRVLLLAASIASVVLMVTSKQTEIIVSPFGSRPNAAKFQNSPAFIYLVAALSVAGLYSIITALVSLSYMRKPIVPPKLFWILLIHDVLLLGIVAAATGTAGGVGYIGLKGNTHVRWGKIRNVYDKFCRHVGASIIVSLFAAAVLVLLVFVNANSLYRRIPKY.

The Cytoplasmic portion of the chain corresponds to 1–27 (MSSMETEKGAVPTPQAPPVAPTDNKYR). Residues 28 to 48 (VVDVILRVLLLAASIASVVLM) form a helical membrane-spanning segment. Topologically, residues 49-75 (VTSKQTEIIVSPFGSRPNAAKFQNSPA) are extracellular. A helical membrane pass occupies residues 76–96 (FIYLVAALSVAGLYSIITALV). At 97 to 109 (SLSYMRKPIVPPK) the chain is on the cytoplasmic side. The chain crosses the membrane as a helical span at residues 110–130 (LFWILLIHDVLLLGIVAAATG). The Extracellular segment spans residues 131-161 (TAGGVGYIGLKGNTHVRWGKIRNVYDKFCRH). A helical transmembrane segment spans residues 162–182 (VGASIIVSLFAAAVLVLLVFV). The Cytoplasmic segment spans residues 183–194 (NANSLYRRIPKY).

The protein belongs to the Casparian strip membrane proteins (CASP) family. Homodimer and heterodimers.

The protein resides in the cell membrane. This Beta vulgaris subsp. maritima (Sea beet) protein is CASP-like protein Ni6 (Ni6).